A 352-amino-acid chain; its full sequence is UPF0324 membrane protein blr3189 (352 aa).

11 helical membrane passes run 21-43 (IAALIPGILLCIAVAGVSALLER), 53-71 (YVEALVMAILLGMALRSFW), 88-110 (LLEVAVMLLGASISFAAIAASGI), 114-136 (ASIAAVVVIALCVSFGLSRLLGL), 143-165 (LIACGNSICGNSAIAAVAPIIGA), 175-197 (SFTAILGVMMVLGLPLLIPLLQL), 204-226 (ILAGLTVYAVPQVLAATVPAGLV), 236-253 (LMRVLMLGPVVVGLSLVA), 265-284 (VGFFRLVPWFILGFLALATL), 294-316 (VVGPVTKITSFLTVVSMAALGLG), and 329-351 (VTAAVTLSLMLLLGISIALVHWF).

Belongs to the UPF0324 family.

It is found in the cell membrane. In Bradyrhizobium diazoefficiens (strain JCM 10833 / BCRC 13528 / IAM 13628 / NBRC 14792 / USDA 110), this protein is UPF0324 membrane protein blr3189.